The primary structure comprises 374 residues: Chaperone protein DnaJ (374 aa).

The region spanning 4–69 is the J domain; the sequence is SYYEILEITQ…EKRAIYDRYG (66 aa). The CR-type zinc-finger motif lies at 136–213; that stretch reads GCKKNIDFTY…CKGLGYNESK (78 aa). Residues C149, C152, C165, C168, C187, C190, C201, and C204 each contribute to the Zn(2+) site. CXXCXGXG motif repeat units follow at residues 149-156, 165-172, 187-194, and 201-208; these read CKTCNGTG, CPKCQGRG, CPDCQGSG, and CNDCKGLG.

The protein belongs to the DnaJ family. Homodimer. Requires Zn(2+) as cofactor.

It localises to the cytoplasm. Functionally, participates actively in the response to hyperosmotic and heat shock by preventing the aggregation of stress-denatured proteins and by disaggregating proteins, also in an autonomous, DnaK-independent fashion. Unfolded proteins bind initially to DnaJ; upon interaction with the DnaJ-bound protein, DnaK hydrolyzes its bound ATP, resulting in the formation of a stable complex. GrpE releases ADP from DnaK; ATP binding to DnaK triggers the release of the substrate protein, thus completing the reaction cycle. Several rounds of ATP-dependent interactions between DnaJ, DnaK and GrpE are required for fully efficient folding. Also involved, together with DnaK and GrpE, in the DNA replication of plasmids through activation of initiation proteins. The protein is Chaperone protein DnaJ of Campylobacter jejuni subsp. doylei (strain ATCC BAA-1458 / RM4099 / 269.97).